Reading from the N-terminus, the 152-residue chain is Probable flagellum biosynthesis repressor protein FlbT (152 aa).

The protein belongs to the FlbT family.

Functionally, has a post-transcriptional repressor function in flagellum biogenesis. Associates with the 5'-UTR of fljK mRNA and promotes its degradation. This Brucella abortus (strain S19) protein is Probable flagellum biosynthesis repressor protein FlbT.